Consider the following 297-residue polypeptide: GTPase Era (297 aa).

Positions 7–174 (RSGFVSIVGR…VQLVHGLLPE (168 aa)) constitute an Era-type G domain. The G1 stretch occupies residues 15–22 (GRPNVGKS). A GTP-binding site is contributed by 15–22 (GRPNVGKS). The interval 41 to 45 (QTTRN) is G2. The interval 62–65 (DTPG) is G3. GTP is bound by residues 62 to 66 (DTPGI) and 124 to 127 (NKID). Residues 124–127 (NKID) are G4. A G5 region spans residues 153–155 (VSA). The KH type-2 domain maps to 205–282 (THDEVPYSTA…FLELFVRVSG (78 aa)).

The protein belongs to the TRAFAC class TrmE-Era-EngA-EngB-Septin-like GTPase superfamily. Era GTPase family. In terms of assembly, monomer.

It is found in the cytoplasm. The protein resides in the cell inner membrane. Functionally, an essential GTPase that binds both GDP and GTP, with rapid nucleotide exchange. Plays a role in 16S rRNA processing and 30S ribosomal subunit biogenesis and possibly also in cell cycle regulation and energy metabolism. The chain is GTPase Era from Geobacter sp. (strain M21).